A 107-amino-acid polypeptide reads, in one-letter code: L-rhamnose mutarotase (107 aa).

Tyrosine 21 serves as a coordination point for substrate. The active-site Proton donor is the histidine 25. Residues tyrosine 44 and 79 to 80 (WW) contribute to the substrate site. Residues 88 to 107 (ETNPDNSPKTNSLKEVFHLD) are disordered. The span at 90–100 (NPDNSPKTNSL) shows a compositional bias: polar residues.

Belongs to the rhamnose mutarotase family. As to quaternary structure, homodimer.

It is found in the cytoplasm. It catalyses the reaction alpha-L-rhamnose = beta-L-rhamnose. The protein operates within carbohydrate metabolism; L-rhamnose metabolism. In terms of biological role, involved in the anomeric conversion of L-rhamnose. The protein is L-rhamnose mutarotase of Flavobacterium johnsoniae (strain ATCC 17061 / DSM 2064 / JCM 8514 / BCRC 14874 / CCUG 350202 / NBRC 14942 / NCIMB 11054 / UW101) (Cytophaga johnsonae).